The following is a 418-amino-acid chain: STE20-related kinase adapter protein beta (418 aa).

A Protein kinase domain is found at 58-369 (YELQVEIGRG…ASSLLSHVFF (312 aa)). ATP-binding positions include 64-72 (IGRGFDNLT) and K89.

It belongs to the protein kinase superfamily. STE Ser/Thr protein kinase family. STE20 subfamily. In terms of assembly, component of a trimeric complex composed of STK11/LKB1, STRAD (STRADA or STRADB) and CAB39/MO25 (CAB39/MO25alpha or CAB39L/MO25beta): the complex tethers STK11/LKB1 in the cytoplasm and stimulates its catalytic activity. Interacts with BIRC4/XIAP. These two proteins are likely to coexist in a complex with TAK1, TRAF6, TAB1 and TAB2.

It is found in the nucleus. It localises to the cytoplasm. Pseudokinase which, in complex with CAB39/MO25 (CAB39/MO25alpha or CAB39L/MO25beta), binds to and activates STK11/LKB1. Adopts a closed conformation typical of active protein kinases and binds STK11/LKB1 as a pseudosubstrate, promoting conformational change of STK11/LKB1 in an active conformation. This chain is STE20-related kinase adapter protein beta (Stradb), found in Mus musculus (Mouse).